The chain runs to 322 residues: GDSL esterase/lipase At5g03600 (322 aa).

Ser21 (nucleophile) is an active-site residue. Residues Asp295 and His298 contribute to the active site.

This sequence belongs to the 'GDSL' lipolytic enzyme family.

This chain is GDSL esterase/lipase At5g03600, found in Arabidopsis thaliana (Mouse-ear cress).